The following is an 831-amino-acid chain: Leucine--tRNA ligase (831 aa).

Residues 35–45 (PYPSGKIHVGH) carry the 'HIGH' region motif. The short motif at 600–604 (KMSKS) is the 'KMSKS' region element. K603 is a binding site for ATP.

The protein belongs to the class-I aminoacyl-tRNA synthetase family.

Its subcellular location is the cytoplasm. It carries out the reaction tRNA(Leu) + L-leucine + ATP = L-leucyl-tRNA(Leu) + AMP + diphosphate. This chain is Leucine--tRNA ligase, found in Rickettsia bellii (strain RML369-C).